The chain runs to 212 residues: MQLFHLCLIISCSCPTVQASKLCLGWLWGMDIDPYKEFGASVELLSFLPSDFFPSVRDLLDTASALYREALESPEHCSPHHTALRQAILCWGELMNLATWVGSNLEDPASRELVVSYVNVNMGLKIRQLLWFHISCLTFGRETVLEYLVSFGVWIRTPPAYRPPNAPILSTLPETTVVRRRGRSPRRRTPSPRRRRSQSPRRRRSQSRESQC.

An N-terminal signal peptide occupies residues 1–19; the sequence is MQLFHLCLIISCSCPTVQA. Residues 25-27 are HBEAG; the sequence is GWL. The disordered stretch occupies residues 165–212; sequence NAPILSTLPETTVVRRRGRSPRRRTPSPRRRRSQSPRRRRSQSRESQC. Residues 178–205 are compositionally biased toward basic residues; that stretch reads VRRRGRSPRRRTPSPRRRRSQSPRRRRS. The stretch at 184–190 is one 1; half-length repeat; sequence SPRRRTP. The tract at residues 184–206 is 3 X 8 AA repeats of S-P-R-R-R-R-S-Q; it reads SPRRRTPSPRRRRSQSPRRRRSQ. A propeptide spanning residues 184–212 is cleaved from the precursor; sequence SPRRRTPSPRRRRSQSPRRRRSQSRESQC. 2 tandem repeats follow at residues 191–198 and 199–206.

It belongs to the orthohepadnavirus precore antigen family. In terms of assembly, homodimerizes. Post-translationally, phosphorylated. Cleaved by host furin.

The protein resides in the secreted. It is found in the host nucleus. May regulate immune response to the intracellular capsid in acting as a T-cell tolerogen, by having an immunoregulatory effect which prevents destruction of infected cells by cytotoxic T-cells. This immune regulation may predispose to chronicity during perinatal infections and prevent severe liver injury during adult infections. This is External core antigen from Homo sapiens (Human).